The chain runs to 351 residues: uncharacterized protein (351 aa).

Positions 215, 226, 290, 319, and 333 each coordinate Mn(2+).

Belongs to the peptidase M24B family. Requires Mn(2+) as cofactor.

This is an uncharacterized protein from Staphylococcus aureus (strain MRSA252).